Consider the following 291-residue polypeptide: N-acetylmannosamine kinase (291 aa).

ATP contacts are provided by residues 5 to 12 and 132 to 139; these read AIDIGGTK and GVGGGVVS. Zn(2+) contacts are provided by His156, Cys166, Cys168, and Cys173.

Belongs to the ROK (NagC/XylR) family. NanK subfamily. In terms of assembly, homodimer.

The enzyme catalyses an N-acyl-D-mannosamine + ATP = an N-acyl-D-mannosamine 6-phosphate + ADP + H(+). The protein operates within amino-sugar metabolism; N-acetylneuraminate degradation; D-fructose 6-phosphate from N-acetylneuraminate: step 2/5. In terms of biological role, catalyzes the phosphorylation of N-acetylmannosamine (ManNAc) to ManNAc-6-P. The polypeptide is N-acetylmannosamine kinase (Escherichia coli (strain ATCC 8739 / DSM 1576 / NBRC 3972 / NCIMB 8545 / WDCM 00012 / Crooks)).